We begin with the raw amino-acid sequence, 1650 residues long: HEAT repeat-containing protein 1 homolog (1650 aa).

Positions 1183-1210 are disordered; it reads QYDSAASPGSSVAGGRGNRGHRIRQQSL. Residues 1609–1645 form an HEAT repeat; the sequence is LLPFLNELIEDENKQVEAQCQKVINSLQHKFGETFWS.

Belongs to the HEATR1/UTP10 family.

The protein localises to the nucleus. The protein resides in the nucleolus. In terms of biological role, involved in nucleolar processing of pre-18S ribosomal RNA. Involved in ribosome biosynthesis. This chain is HEAT repeat-containing protein 1 homolog (toe-1), found in Caenorhabditis elegans.